The following is a 1035-amino-acid chain: Putative protein FAM47C (1035 aa).

Disordered regions lie at residues 1-21 (MGDQRPQDRPSSPGMDSTPWY) and 159-797 (LEDA…RRVS). Basic and acidic residues predominate over residues 159-173 (LEDAGSCEGQEKTTD). Over residues 380–392 (PEPPKTRVPPLRP) the composition is skewed to pro residues. A compositionally biased stretch (basic and acidic residues) spans 478–490 (PPEKDVSHLRPEP). Residues 533–544 (SLHQAPPESSVS) are compositionally biased toward polar residues. Composition is skewed to basic and acidic residues over residues 611-622 (PETRVSHLRPEP), 683-694 (PETRVSHLRPEP), and 753-766 (EPLETRVSHLRPEP).

This sequence belongs to the FAM47 family.

In Homo sapiens (Human), this protein is Putative protein FAM47C (FAM47C).